Reading from the N-terminus, the 82-residue chain is Large ribosomal subunit protein uL23 (82 aa).

This sequence belongs to the universal ribosomal protein uL23 family. In terms of assembly, part of the 50S ribosomal subunit. Contacts protein L29.

Binds to 23S rRNA. One of the proteins that surrounds the polypeptide exit tunnel on the outside of the ribosome. This Natronomonas pharaonis (strain ATCC 35678 / DSM 2160 / CIP 103997 / JCM 8858 / NBRC 14720 / NCIMB 2260 / Gabara) (Halobacterium pharaonis) protein is Large ribosomal subunit protein uL23.